We begin with the raw amino-acid sequence, 226 residues long: Phosphoribosylformylglycinamidine synthase subunit PurQ (226 aa).

The 223-residue stretch at 4–226 folds into the Glutamine amidotransferase type-1 domain; that stretch reads RIGVVTFPGS…TSILKKLVNA (223 aa). Cysteine 87 acts as the Nucleophile in catalysis. Residues histidine 196 and glutamate 198 contribute to the active site.

Part of the FGAM synthase complex composed of 1 PurL, 1 PurQ and 2 PurS subunits.

The protein localises to the cytoplasm. It catalyses the reaction N(2)-formyl-N(1)-(5-phospho-beta-D-ribosyl)glycinamide + L-glutamine + ATP + H2O = 2-formamido-N(1)-(5-O-phospho-beta-D-ribosyl)acetamidine + L-glutamate + ADP + phosphate + H(+). The catalysed reaction is L-glutamine + H2O = L-glutamate + NH4(+). Its pathway is purine metabolism; IMP biosynthesis via de novo pathway; 5-amino-1-(5-phospho-D-ribosyl)imidazole from N(2)-formyl-N(1)-(5-phospho-D-ribosyl)glycinamide: step 1/2. In terms of biological role, part of the phosphoribosylformylglycinamidine synthase complex involved in the purines biosynthetic pathway. Catalyzes the ATP-dependent conversion of formylglycinamide ribonucleotide (FGAR) and glutamine to yield formylglycinamidine ribonucleotide (FGAM) and glutamate. The FGAM synthase complex is composed of three subunits. PurQ produces an ammonia molecule by converting glutamine to glutamate. PurL transfers the ammonia molecule to FGAR to form FGAM in an ATP-dependent manner. PurS interacts with PurQ and PurL and is thought to assist in the transfer of the ammonia molecule from PurQ to PurL. In Streptomyces coelicolor (strain ATCC BAA-471 / A3(2) / M145), this protein is Phosphoribosylformylglycinamidine synthase subunit PurQ.